The primary structure comprises 182 residues: Superoxide dismutase [Cu-Zn] (182 aa).

A signal peptide spans 1–19 (MFRTLTVVPLLALGLSLSA). A lipid anchor (N-palmitoyl cysteine) is attached at Cys-20. Cys-20 is lipidated: S-diacylglycerol cysteine. 3 residues coordinate Cu cation: His-69, His-71, and His-95. An intrachain disulfide couples Cys-76 to Cys-175. The disordered stretch occupies residues 91–118 (AAGGHFDPGASHNHDGPHARNDQGHGGD). Zn(2+) is bound by residues His-95, His-104, His-115, and Asp-118. The span at 102 to 115 (HNHDGPHARNDQGH) shows a compositional bias: basic and acidic residues.

Belongs to the Cu-Zn superoxide dismutase family. Cu cation is required as a cofactor. Requires Zn(2+) as cofactor.

The protein localises to the cell membrane. It carries out the reaction 2 superoxide + 2 H(+) = H2O2 + O2. Destroys radicals which are normally produced within the cells and which are toxic to biological systems. This is Superoxide dismutase [Cu-Zn] (sodC) from Deinococcus radiodurans (strain ATCC 13939 / DSM 20539 / JCM 16871 / CCUG 27074 / LMG 4051 / NBRC 15346 / NCIMB 9279 / VKM B-1422 / R1).